The primary structure comprises 391 residues: BRCA1-A complex subunit Abraxas 1 (391 aa).

The 149-residue stretch at 8 to 156 (VRISGFVLSS…THRLEFSAFI (149 aa)) folds into the MPN domain. The stretch at 223 to 261 (LLAEMQKVCVEVEKSERTVEKLQEDIAQLKEAIGKQKTH) forms a coiled coil. The disordered stretch occupies residues 354–391 (QRLKRKRKTREVSESASESGSDTEIEMNGQSGSNSPVF). Positions 367-391 (ESASESGSDTEIEMNGQSGSNSPVF) are enriched in polar residues. The residue at position 388 (Ser-388) is a Phosphoserine. Residues 388-391 (SPVF) carry the pSXXF motif motif.

It belongs to the FAM175 family. Abraxas subfamily. As to quaternary structure, component of the ARISC complex. Component of the BRCA1-A complex. Homodimer. In terms of processing, phosphorylation of Ser-388 of the pSXXF motif by ATM or ATR constitutes a specific recognition motif for the BRCT domain of BRCA1.

It localises to the nucleus. In terms of biological role, involved in DNA damage response and double-strand break (DSB) repair. Component of the BRCA1-A complex, acting as a central scaffold protein that assembles the various components of the complex. The BRCA1-A complex specifically recognizes 'Lys-63'-linked ubiquitinated histones H2A and H2AX at DNA lesion sites. This complex also possesses deubiquitinase activity that specifically removes 'Lys-63'-linked ubiquitin on histones H2A and H2AX. This Danio rerio (Zebrafish) protein is BRCA1-A complex subunit Abraxas 1.